The chain runs to 21 residues: Snake venom serine protease jerdonase (21 aa).

The Peptidase S1 domain maps to Ile-1–Ala-21.

It belongs to the peptidase S1 family. Snake venom subfamily. As to quaternary structure, monomer. Post-translationally, glycosylated; contains 35.8% neutral carbohydrate. Expressed by the venom gland.

The protein localises to the secreted. Inhibited by PMSF and soybean trypsin inhibitor. Partially inhibited by L-cysteine and DTT. Not affected by EDTA. Functionally, multifunctional venom serine protease that has fibrino(geno)lytic activity towards the A alpha-chain of human fibrinogen (FGA) and a slow activity towards the B beta-chain (FGB). Also hydrolyzes bovine low-molecular-mass kininogen and releases bradykinin. Catalyzes the hydrolysis of BAEE, S-2238 and S-2302. The polypeptide is Snake venom serine protease jerdonase (Protobothrops jerdonii (Jerdon's pitviper)).